The following is a 101-amino-acid chain: NAD(P)H-quinone oxidoreductase subunit 4L, chloroplastic (101 aa).

The next 3 helical transmembrane spans lie at 2-22 (ILEHVLVLSAYLFSIGIYGLI), 32-52 (MCLELILNAVNINFVTFSDFF), and 61-81 (IFSIFVIAIAAAEAAIGLAIV).

Belongs to the complex I subunit 4L family. As to quaternary structure, NDH is composed of at least 16 different subunits, 5 of which are encoded in the nucleus.

It localises to the plastid. The protein resides in the chloroplast thylakoid membrane. The enzyme catalyses a plastoquinone + NADH + (n+1) H(+)(in) = a plastoquinol + NAD(+) + n H(+)(out). It carries out the reaction a plastoquinone + NADPH + (n+1) H(+)(in) = a plastoquinol + NADP(+) + n H(+)(out). Functionally, NDH shuttles electrons from NAD(P)H:plastoquinone, via FMN and iron-sulfur (Fe-S) centers, to quinones in the photosynthetic chain and possibly in a chloroplast respiratory chain. The immediate electron acceptor for the enzyme in this species is believed to be plastoquinone. Couples the redox reaction to proton translocation, and thus conserves the redox energy in a proton gradient. The polypeptide is NAD(P)H-quinone oxidoreductase subunit 4L, chloroplastic (Eucalyptus globulus subsp. globulus (Tasmanian blue gum)).